The sequence spans 473 residues: Glutathione reductase, mitochondrial (473 aa).

FAD contacts are provided by Ser-30 and Gly-31. A glutathione-binding site is contributed by Ser-30. Position 37 (Arg-37) interacts with glutathione. FAD-binding residues include Glu-50, Thr-57, Cys-58, and Lys-66. A disulfide bridge links Cys-58 with Cys-63. Tyr-114 is a binding site for glutathione. Residue Ala-130 coordinates FAD. NADP(+) contacts are provided by Ala-190, Ile-193, Glu-196, Arg-213, Arg-219, and Gly-279. Residue Asp-320 coordinates FAD. Leu-326 serves as a coordination point for NADP(+). Residue Thr-328 participates in FAD binding. Glutathione is bound at residue Arg-336. Val-359 provides a ligand contact to NADP(+). His-456 contributes to the FAD binding site. The Proton acceptor role is filled by His-456.

Belongs to the class-I pyridine nucleotide-disulfide oxidoreductase family. The cofactor is FAD. In terms of tissue distribution, expressed at all larval stages and in adults in intestine, vulva muscle, pharynx and some cells in the tail.

Its subcellular location is the cytoplasm. The protein localises to the mitochondrion. It catalyses the reaction 2 glutathione + NADP(+) = glutathione disulfide + NADPH + H(+). Catalyzes the reduction of glutathione disulfide (GSSG) to reduced glutathione (GSH). Constitutes the major mechanism to maintain a high GSH:GSSG ratio in the cytosol. Involved in resistance to oxidative stress and starvation. Together with thioredoxin reductase txtr-1, required for the reduction of disulfide groups in the cuticle during molting. The chain is Glutathione reductase, mitochondrial from Caenorhabditis elegans.